An 89-amino-acid chain; its full sequence is Small ribosomal subunit protein uS15 (89 aa).

The protein belongs to the universal ribosomal protein uS15 family. Part of the 30S ribosomal subunit. Forms a bridge to the 50S subunit in the 70S ribosome, contacting the 23S rRNA.

One of the primary rRNA binding proteins, it binds directly to 16S rRNA where it helps nucleate assembly of the platform of the 30S subunit by binding and bridging several RNA helices of the 16S rRNA. Its function is as follows. Forms an intersubunit bridge (bridge B4) with the 23S rRNA of the 50S subunit in the ribosome. In Nitrosospira multiformis (strain ATCC 25196 / NCIMB 11849 / C 71), this protein is Small ribosomal subunit protein uS15.